The sequence spans 330 residues: Ferredoxin--NADP reductase (330 aa).

The FAD site is built by Thr-19, Asp-38, Gln-46, Tyr-51, Ala-91, Phe-129, Asp-286, and Ser-327.

It belongs to the ferredoxin--NADP reductase type 2 family. Homodimer. FAD serves as cofactor.

It carries out the reaction 2 reduced [2Fe-2S]-[ferredoxin] + NADP(+) + H(+) = 2 oxidized [2Fe-2S]-[ferredoxin] + NADPH. The polypeptide is Ferredoxin--NADP reductase (Nocardioides sp. (strain ATCC BAA-499 / JS614)).